The chain runs to 452 residues: Phosphoglucosamine mutase (452 aa).

The Phosphoserine intermediate role is filled by Ser-108. Residues Ser-108, Asp-247, Asp-249, and Asp-251 each contribute to the Mg(2+) site. Ser-108 bears the Phosphoserine mark.

Belongs to the phosphohexose mutase family. The cofactor is Mg(2+). Activated by phosphorylation.

It carries out the reaction alpha-D-glucosamine 1-phosphate = D-glucosamine 6-phosphate. Catalyzes the conversion of glucosamine-6-phosphate to glucosamine-1-phosphate. In Burkholderia pseudomallei (strain K96243), this protein is Phosphoglucosamine mutase.